The following is a 790-amino-acid chain: GATOR2 complex protein WDR24 (790 aa).

WD repeat units follow at residues 72-112 (SLNL…RNKQ), 118-158 (EHKR…SVST), 161-201 (GQSE…RCER), 205-245 (AHNG…AKEM), 249-291 (QTIA…VPAA), and 295-338 (EHRD…VERA). Ser155 bears the Phosphoserine; by AMPK mark. A phosphoserine mark is found at Ser470 and Ser496. A Phosphothreonine modification is found at Thr581. A phosphoserine mark is found at Ser594 and Ser598. A C4-type zinc finger spans residues 718–740 (NCSHCKRPMSSRGWVCDRCHRCA). Zn(2+) contacts are provided by Cys719, Cys722, Cys733, Cys736, Cys743, Cys746, Cys757, Cys760, His762, His765, His768, Cys779, Cys783, His785, and Cys787. The segment at 741–790 (SMCAVCHHVVKGLFVWCQGCSHGGHLQHIMKWLEGSSHCPAGCGHLCEYS) adopts an RING-type; atypical zinc-finger fold.

Belongs to the WD repeat WDR24 family. As to quaternary structure, component of the GATOR2 subcomplex, composed of MIOS, SEC13, SEH1L, WDR24 and WDR59. The GATOR2 complex interacts with CASTOR1 and CASTOR2; the interaction is negatively regulated by arginine. The GATOR2 complex interacts with SESN1, SESN2 and SESN3; the interaction is negatively regulated by amino acids. SESN1, SESN2 and SESN3 convey leucine availability via direct interaction with SEH1L and WDR24. Post-translationally, phosphorylation at Ser-155 by AMPK in response to glucose deprivation inactivates WDR24 by promoting interaction with 14-3-3 proteins, such as YWHAG, preventing assembly of the GATOR2 complex. In terms of processing, autoubiquitinated; MIOS is required to prevent autoubiquitination.

The protein localises to the lysosome membrane. It carries out the reaction S-ubiquitinyl-[E2 ubiquitin-conjugating enzyme]-L-cysteine + [acceptor protein]-L-lysine = [E2 ubiquitin-conjugating enzyme]-L-cysteine + N(6)-ubiquitinyl-[acceptor protein]-L-lysine.. The protein operates within protein modification; protein ubiquitination. Its activity is regulated as follows. The GATOR2 complex is negatively regulated by the upstream amino acid sensors CASTOR1 and SESN2, which sequester the GATOR2 complex in absence of amino acids. In the presence of abundant amino acids, GATOR2 is released from CASTOR1 and SESN2 and activated. Its function is as follows. Catalytic component of the GATOR2 complex, a multiprotein complex that acts as an activator of the amino acid-sensing branch of the mTORC1 signaling pathway. The GATOR2 complex indirectly activates mTORC1 through the inhibition of the GATOR1 subcomplex. GATOR2 probably acts as an E3 ubiquitin-protein ligase toward GATOR1. In the presence of abundant amino acids, the GATOR2 complex mediates ubiquitination of the NPRL2 core component of the GATOR1 complex, leading to GATOR1 inactivation. In the absence of amino acids, GATOR2 is inhibited, activating the GATOR1 complex. In addition to its role in regulation of the mTORC1 complex, promotes the acidification of lysosomes and facilitates autophagic flux. Within the GATOR2 complex, WDR24 constitutes the catalytic subunit that mediates 'Lys-6'-linked ubiquitination of NPRL2. This chain is GATOR2 complex protein WDR24, found in Homo sapiens (Human).